The primary structure comprises 561 residues: Dihydroxy-acid dehydratase (561 aa).

Cysteine 50 contributes to the [2Fe-2S] cluster binding site. Residue aspartate 82 coordinates Mg(2+). Cysteine 123 contacts [2Fe-2S] cluster. Aspartate 124 and lysine 125 together coordinate Mg(2+). The residue at position 125 (lysine 125) is an N6-carboxylysine. Cysteine 195 provides a ligand contact to [2Fe-2S] cluster. Mg(2+) is bound at residue glutamate 447. The active-site Proton acceptor is the serine 473.

This sequence belongs to the IlvD/Edd family. As to quaternary structure, homodimer. The cofactor is [2Fe-2S] cluster. Requires Mg(2+) as cofactor.

It carries out the reaction (2R)-2,3-dihydroxy-3-methylbutanoate = 3-methyl-2-oxobutanoate + H2O. The catalysed reaction is (2R,3R)-2,3-dihydroxy-3-methylpentanoate = (S)-3-methyl-2-oxopentanoate + H2O. The protein operates within amino-acid biosynthesis; L-isoleucine biosynthesis; L-isoleucine from 2-oxobutanoate: step 3/4. It participates in amino-acid biosynthesis; L-valine biosynthesis; L-valine from pyruvate: step 3/4. Functionally, functions in the biosynthesis of branched-chain amino acids. Catalyzes the dehydration of (2R,3R)-2,3-dihydroxy-3-methylpentanoate (2,3-dihydroxy-3-methylvalerate) into 2-oxo-3-methylpentanoate (2-oxo-3-methylvalerate) and of (2R)-2,3-dihydroxy-3-methylbutanoate (2,3-dihydroxyisovalerate) into 2-oxo-3-methylbutanoate (2-oxoisovalerate), the penultimate precursor to L-isoleucine and L-valine, respectively. This is Dihydroxy-acid dehydratase from Chloroflexus aurantiacus (strain ATCC 29366 / DSM 635 / J-10-fl).